The sequence spans 332 residues: Anthranilate phosphoribosyltransferase (332 aa).

Residues glycine 79, glycine 82–aspartate 83, serine 87, asparagine 89–threonine 92, lysine 107–serine 115, and serine 119 contribute to the 5-phospho-alpha-D-ribose 1-diphosphate site. Glycine 79 contributes to the anthranilate binding site. Serine 91 contributes to the Mg(2+) binding site. Asparagine 110 contacts anthranilate. Arginine 165 contributes to the anthranilate binding site. 2 residues coordinate Mg(2+): aspartate 223 and glutamate 224.

Belongs to the anthranilate phosphoribosyltransferase family. Homodimer. Requires Mg(2+) as cofactor.

It catalyses the reaction N-(5-phospho-beta-D-ribosyl)anthranilate + diphosphate = 5-phospho-alpha-D-ribose 1-diphosphate + anthranilate. It functions in the pathway amino-acid biosynthesis; L-tryptophan biosynthesis; L-tryptophan from chorismate: step 2/5. Its function is as follows. Catalyzes the transfer of the phosphoribosyl group of 5-phosphorylribose-1-pyrophosphate (PRPP) to anthranilate to yield N-(5'-phosphoribosyl)-anthranilate (PRA). The chain is Anthranilate phosphoribosyltransferase from Yersinia pestis bv. Antiqua (strain Antiqua).